A 297-amino-acid chain; its full sequence is Ribosomal RNA small subunit methyltransferase A (297 aa).

S-adenosyl-L-methionine is bound by residues Asn31, Leu33, Gly58, Glu79, Asp104, and Asn129.

The protein belongs to the class I-like SAM-binding methyltransferase superfamily. rRNA adenine N(6)-methyltransferase family. RsmA subfamily.

It localises to the cytoplasm. It carries out the reaction adenosine(1518)/adenosine(1519) in 16S rRNA + 4 S-adenosyl-L-methionine = N(6)-dimethyladenosine(1518)/N(6)-dimethyladenosine(1519) in 16S rRNA + 4 S-adenosyl-L-homocysteine + 4 H(+). In terms of biological role, specifically dimethylates two adjacent adenosines (A1518 and A1519) in the loop of a conserved hairpin near the 3'-end of 16S rRNA in the 30S particle. May play a critical role in biogenesis of 30S subunits. The chain is Ribosomal RNA small subunit methyltransferase A from Staphylococcus aureus (strain Newman).